The sequence spans 121 residues: Small ribosomal subunit protein uS13 (121 aa).

The disordered stretch occupies residues Lys-93 to Lys-121.

This sequence belongs to the universal ribosomal protein uS13 family. Part of the 30S ribosomal subunit. Forms a loose heterodimer with protein S19. Forms two bridges to the 50S subunit in the 70S ribosome.

Its function is as follows. Located at the top of the head of the 30S subunit, it contacts several helices of the 16S rRNA. In the 70S ribosome it contacts the 23S rRNA (bridge B1a) and protein L5 of the 50S subunit (bridge B1b), connecting the 2 subunits; these bridges are implicated in subunit movement. Contacts the tRNAs in the A and P-sites. The polypeptide is Small ribosomal subunit protein uS13 (Burkholderia ambifaria (strain ATCC BAA-244 / DSM 16087 / CCUG 44356 / LMG 19182 / AMMD) (Burkholderia cepacia (strain AMMD))).